Reading from the N-terminus, the 304-residue chain is MEISTDSNMLVALAVIGVTVLLFLIKALGSQAKKAPLTLLDPNAKYPLPLIEKQEISHDTKKFRFGLPSQEHVLGLPVGQHVYLSAKINGSLVVRAYTPVSSDEVKGHVDLIVKVYYKNVHPKFPEGGKMSQHLDSLKIGETIDFRGPNGLLVYKEKGKFAIRPDKKSEPKLKVAKHVGMLAGGTGITPMLQLIRQITQDPNDNTKCSLIFANQTEDDILLRYELETVAKSHPEQFKLWYTLDRPPQGWKYGAGFVTADMIKEHLPPPSEDVVVLMCGPPPMIQFACQDNLTKLGYPEAGRFAY.

The helical transmembrane segment at 9–29 (MLVALAVIGVTVLLFLIKALG) threads the bilayer. An FAD-binding FR-type domain is found at 43–155 (NAKYPLPLIE…RGPNGLLVYK (113 aa)). FAD-binding positions include 135-150 (DSLK…GPNG) and 174-209 (VAKH…KCSL).

Belongs to the flavoprotein pyridine nucleotide cytochrome reductase family. FAD serves as cofactor.

Its subcellular location is the membrane. It catalyses the reaction 2 Fe(III)-[cytochrome b5] + NADH = 2 Fe(II)-[cytochrome b5] + NAD(+) + H(+). In terms of biological role, NADH-cytochrome b5 reductases are involved in desaturation and elongation of fatty acids, cholesterol biosynthesis and drug metabolism. This chain is NADH-cytochrome b5 reductase 2 (cyb5r2), found in Xenopus tropicalis (Western clawed frog).